The primary structure comprises 155 residues: Small ribosomal subunit protein uS7 (155 aa).

The protein belongs to the universal ribosomal protein uS7 family. In terms of assembly, part of the 30S ribosomal subunit. Contacts proteins S9 and S11.

One of the primary rRNA binding proteins, it binds directly to 16S rRNA where it nucleates assembly of the head domain of the 30S subunit. Is located at the subunit interface close to the decoding center, probably blocks exit of the E-site tRNA. This chain is Small ribosomal subunit protein uS7, found in Ureaplasma parvum serovar 3 (strain ATCC 27815 / 27 / NCTC 11736).